The following is a 489-amino-acid chain: Homoserine O-acetyltransferase (489 aa).

Positions 63-435 constitute an AB hydrolase-1 domain; the sequence is NALVICHALS…SPEGHDAFLL (373 aa). S162 is an active-site residue. S162 functions as the Nucleophile in the catalytic mechanism. The tract at residues 247-272 is disordered; it reads RFGRNVPDPSKRQNINGTERLPTPPN. Active-site residues include D401 and H430.

Belongs to the AB hydrolase superfamily. MetX family.

It catalyses the reaction L-homoserine + acetyl-CoA = O-acetyl-L-homoserine + CoA. Its pathway is amino-acid biosynthesis; L-methionine biosynthesis via de novo pathway; O-acetyl-L-homoserine from L-homoserine: step 1/1. Functionally, commits homoserine to the methionine biosynthesis pathway by catalyzing its O-acetylation. This chain is Homoserine O-acetyltransferase (metE), found in Emericella nidulans (strain FGSC A4 / ATCC 38163 / CBS 112.46 / NRRL 194 / M139) (Aspergillus nidulans).